The sequence spans 338 residues: MANRANRHAARTEDSDNTINYVQCDGLAVMKMVKHCHEESSNMDLAQGALLGLVVDKCLEITNCFPFPKSGDETMDEEMYQLTVMRRLRRVNVDHLHVGWYQSSDVGNSLSMALLESQYHYQTSIEESVVVVYDTQKSSRGFLCLKAYRLTPQAIQMYKDGDFTPEAFRTLKVGYENLFAEIPIVIKNSPLTNIMMSELNELLPEDKGHNFLDLGTATVLENQMRSLIERVDELYQEAVRYNKYQQVVFKQDTEKHRALAKLAAENAVRTSKGEPTVPEDEVIKQFRPMTAPNRLTATITSGQINTHAQHIAQFCSQSLAKLFITESLQIAKEAKEAK.

The MPN domain occupies 22-154 (VQCDGLAVMK…LKAYRLTPQA (133 aa)).

This sequence belongs to the eIF-3 subunit H family. As to quaternary structure, component of the eukaryotic translation initiation factor 3 (eIF-3) complex. The eIF-3 complex interacts with pix. Interacts with mxt.

It is found in the cytoplasm. Functionally, component of the eukaryotic translation initiation factor 3 (eIF-3) complex, which is involved in protein synthesis of a specialized repertoire of mRNAs and, together with other initiation factors, stimulates binding of mRNA and methionyl-tRNAi to the 40S ribosome. The eIF-3 complex specifically targets and initiates translation of a subset of mRNAs involved in cell proliferation. The protein is Eukaryotic translation initiation factor 3 subunit H of Drosophila sechellia (Fruit fly).